We begin with the raw amino-acid sequence, 138 residues long: Large ribosomal subunit protein bL19 (138 aa).

The protein belongs to the bacterial ribosomal protein bL19 family.

Functionally, this protein is located at the 30S-50S ribosomal subunit interface and may play a role in the structure and function of the aminoacyl-tRNA binding site. This chain is Large ribosomal subunit protein bL19, found in Rickettsia massiliae (strain Mtu5).